The chain runs to 239 residues: tRNA (guanine-N(1)-)-methyltransferase (239 aa).

Residues Gly-109 and 128–133 (IGDYVL) contribute to the S-adenosyl-L-methionine site.

The protein belongs to the RNA methyltransferase TrmD family. As to quaternary structure, homodimer.

The protein localises to the cytoplasm. It catalyses the reaction guanosine(37) in tRNA + S-adenosyl-L-methionine = N(1)-methylguanosine(37) in tRNA + S-adenosyl-L-homocysteine + H(+). Specifically methylates guanosine-37 in various tRNAs. The polypeptide is tRNA (guanine-N(1)-)-methyltransferase (Thermus thermophilus (strain ATCC BAA-163 / DSM 7039 / HB27)).